We begin with the raw amino-acid sequence, 310 residues long: Beta-lactamase AST-1 (310 aa).

An N-terminal signal peptide occupies residues 1–31 (MTFSALPFRRADRRRLLAAALAACALTLTAA). Cysteine 32 is lipidated: N-palmitoyl cysteine. Cysteine 32 carries the S-diacylglycerol cysteine lipid modification. Residue serine 91 is the Acyl-ester intermediate of the active site. Position 151 (serine 151) interacts with substrate. The Proton acceptor role is filled by glutamate 187. 255–257 (KTG) contacts substrate.

Belongs to the class-A beta-lactamase family.

The protein resides in the cell membrane. It catalyses the reaction a beta-lactam + H2O = a substituted beta-amino acid. With respect to regulation, inhibited by clavulanic acid. In terms of biological role, confers high levels of resistance to amoxicillin, benzylpenicillin, piperacillin, ticarcillin and cephalothin. Not active against ceftazidime, cefotaxime and aztreonam. The chain is Beta-lactamase AST-1 (bla) from Nocardia asteroides.